A 338-amino-acid polypeptide reads, in one-letter code: 1-aminocyclopropane-1-carboxylate deaminase (338 aa).

K51 bears the N6-(pyridoxal phosphate)lysine mark. The active-site Nucleophile is the S78.

It belongs to the ACC deaminase/D-cysteine desulfhydrase family. As to quaternary structure, homotrimer. Pyridoxal 5'-phosphate serves as cofactor.

It carries out the reaction 1-aminocyclopropane-1-carboxylate + H2O = 2-oxobutanoate + NH4(+). Functionally, catalyzes a cyclopropane ring-opening reaction, the irreversible conversion of 1-aminocyclopropane-1-carboxylate (ACC) to ammonia and alpha-ketobutyrate. Allows growth on ACC as a nitrogen source. This Burkholderia multivorans (strain ATCC 17616 / 249) protein is 1-aminocyclopropane-1-carboxylate deaminase.